The primary structure comprises 180 residues: ATP-dependent protease subunit HslV (180 aa).

The active site involves threonine 7. 3 residues coordinate Na(+): glycine 165, cysteine 168, and threonine 171.

It belongs to the peptidase T1B family. HslV subfamily. In terms of assembly, a double ring-shaped homohexamer of HslV is capped on each side by a ring-shaped HslU homohexamer. The assembly of the HslU/HslV complex is dependent on binding of ATP.

It localises to the cytoplasm. The enzyme catalyses ATP-dependent cleavage of peptide bonds with broad specificity.. With respect to regulation, allosterically activated by HslU binding. Protease subunit of a proteasome-like degradation complex believed to be a general protein degrading machinery. The sequence is that of ATP-dependent protease subunit HslV from Bacillus cytotoxicus (strain DSM 22905 / CIP 110041 / 391-98 / NVH 391-98).